The primary structure comprises 312 residues: MSELKISPELLQISPEVQDALKNKKPVVALESTIISHGMPFPQNAQTAIEVEETIRKQGAVPATIAIIGGVMKVGLSKEEIELLGREGHNVTKVSRRDLPFVVAAGKNGATTVASTMIIAALAGIKVFATGGIGGVHRGAEHTFDISADLQELANTNVTVVCAGAKSILDLGLTTEYLETFGVPLIGYQTKALPAFFCRTSPFDVSIRLDSASEIARAMVVKWQSGLNGGLVVANPIPEQFAMPEHTINAAIDQAVAEAEAQGVIGKESTPFLLARVAELTGGDSLKSNIQLVFNNAILASEIAKEYQRLAG.

Catalysis depends on E31, which acts as the Proton donor. K93 and V113 together coordinate substrate. Mn(2+) is bound at residue D145. 147–149 (SAD) is a binding site for substrate. K166 functions as the Nucleophile in the catalytic mechanism.

Belongs to the pseudouridine-5'-phosphate glycosidase family. Homotrimer. It depends on Mn(2+) as a cofactor. Requires Fe(2+) as cofactor. The cofactor is Co(2+).

It catalyses the reaction D-ribose 5-phosphate + uracil = psi-UMP + H2O. Inhibited by Zn(2+) and Ni(2+). In terms of biological role, catalyzes the reversible cleavage of pseudouridine 5'-phosphate (PsiMP) to ribose 5-phosphate and uracil. Functions biologically in the cleavage direction, as part of a pseudouridine degradation pathway. The sequence is that of Pseudouridine-5'-phosphate glycosidase from Escherichia coli (strain K12).